Here is a 205-residue protein sequence, read N- to C-terminus: Small ribosomal subunit protein uS4 (205 aa).

A disordered region spans residues 18–46 (NIWGRPKSPVNRREYGPGQHGQRRKGKLS). Residues 94–157 (RRLDTVVYRS…KQLAIVLEAN (64 aa)) enclose the S4 RNA-binding domain.

Belongs to the universal ribosomal protein uS4 family. As to quaternary structure, part of the 30S ribosomal subunit. Contacts protein S5. The interaction surface between S4 and S5 is involved in control of translational fidelity.

In terms of biological role, one of the primary rRNA binding proteins, it binds directly to 16S rRNA where it nucleates assembly of the body of the 30S subunit. Its function is as follows. With S5 and S12 plays an important role in translational accuracy. In Rhodopseudomonas palustris (strain BisB5), this protein is Small ribosomal subunit protein uS4.